The chain runs to 90 residues: Probable Fe(2+)-trafficking protein (90 aa).

It belongs to the Fe(2+)-trafficking protein family.

Could be a mediator in iron transactions between iron acquisition and iron-requiring processes, such as synthesis and/or repair of Fe-S clusters in biosynthetic enzymes. This is Probable Fe(2+)-trafficking protein from Polynucleobacter asymbioticus (strain DSM 18221 / CIP 109841 / QLW-P1DMWA-1) (Polynucleobacter necessarius subsp. asymbioticus).